Consider the following 575-residue polypeptide: Cyclic nucleotide-gated channel alpha-4 (575 aa).

Over M1–L38 the chain is Cytoplasmic. The helical transmembrane segment at N39–D60 threads the bilayer. Residues L61–F70 lie on the Extracellular side of the membrane. Residues V71–G91 form a helical membrane-spanning segment. Residues F92–L116 lie on the Cytoplasmic side of the membrane. Residues L117 to H135 traverse the membrane as a helical segment. Residues I136 to R140 lie on the Extracellular side of the membrane. A helical transmembrane segment spans residues L141–T159. Residues R160 to A166 lie on the Cytoplasmic side of the membrane. The tract at residues P164–M272 is ion conduction pathway. A helical membrane pass occupies residues F167–L190. At S191–R213 the chain is on the extracellular side. A run of 2 helical transmembrane segments spans residues L214–V248 and G249–N273. Residues T231–D234 are selectivity filter. Positions T274 to Q350 are C-linker. Over T274–E575 the chain is Cytoplasmic. Positions L292–R302 match the IQ-type motif. Position 348-471 (I348–I471) interacts with a nucleoside 3',5'-cyclic phosphate. The segment at A354–K474 is cyclic nucleotide-binding domain. G414, S417, R430, and T431 together coordinate 3',5'-cyclic GMP. 3',5'-cyclic AMP is bound by residues R430 and T431. A coiled-coil region spans residues T493–E547. The tract at residues T536 to E575 is disordered. Over residues D544–P554 the composition is skewed to acidic residues. The span at T558–G567 shows a compositional bias: basic and acidic residues.

It belongs to the cyclic nucleotide-gated cation channel (TC 1.A.1.5) family. CNGA4 subfamily. The olfactory cyclic nucleotide-gated channel is an heterotetramer composed of CNGA2, CNGA4 and CNGB1b subunits with 2:1:1 stoichiometry. As to expression, expressed in the olfactory epithelium.

The protein resides in the cell projection. Its subcellular location is the cilium membrane. It catalyses the reaction Ca(2+)(in) = Ca(2+)(out). It carries out the reaction Na(+)(in) = Na(+)(out). The catalysed reaction is K(+)(in) = K(+)(out). The enzyme catalyses NH4(+)(in) = NH4(+)(out). It catalyses the reaction Rb(+)(in) = Rb(+)(out). It carries out the reaction Li(+)(in) = Li(+)(out). The catalysed reaction is Cs(+)(in) = Cs(+)(out). Ca(2+)-calmodulin exerts its inhibitory effect in cAMP sensitivity by binding to IQ-like motif of CNGA4 and preferably binds to the channel in the closed state. Inhibition by PIP3 of the CNG channel probably occurs via CGNA2 binding. Its function is as follows. Pore-forming subunit of the olfactory cyclic nucleotide-gated channel. Operates in the cilia of olfactory sensory neurons where chemical stimulation of the odorant is converted to an electrical signal. Mediates odorant-induced cAMP-dependent Ca(2+) influx triggering neuron depolarization. The rise of intracellular Ca(2+) levels potentiates the olfactory response by activating Ca(2+)-dependent Cl(-) channels, but it also serves as a negative feedback signal to desensitize the channel for rapid adaptation to odorants. Conducts cGMP- and cAMP-gated ion currents, with permeability for monovalent and divalent cations. Conducts cAMP- and cGMP-gated ion currents, with permeability for monovalent and divalent cations. May conduct nitric oxide-gated Ca(2+) currents relevant to neurons of vomeronasal organ, a system involved in the perception of pheromones. This Mus musculus (Mouse) protein is Cyclic nucleotide-gated channel alpha-4.